The chain runs to 589 residues: Peroxisomal biogenesis factor 8 (589 aa).

A Microbody targeting signal motif is present at residues 587–589 (SKL).

The protein localises to the peroxisome matrix. In terms of biological role, required for peroxisome assembly. This Saccharomyces cerevisiae (strain ATCC 204508 / S288c) (Baker's yeast) protein is Peroxisomal biogenesis factor 8 (PEX8).